The sequence spans 158 residues: Inorganic pyrophosphatase (158 aa).

Mg(2+) is bound at residue Glu-8. Substrate contacts are provided by Lys-16, Arg-30, and Tyr-42. The Mg(2+) site is built by Asp-52, Asp-57, Asp-84, and Asp-89. The active-site Proton acceptor is Asp-89. Tyr-125 contacts substrate.

Belongs to the PPase family. As to quaternary structure, homohexamer. It depends on Mg(2+) as a cofactor.

It localises to the cytoplasm. It catalyses the reaction diphosphate + H2O = 2 phosphate + H(+). Its function is as follows. Catalyzes the hydrolysis of inorganic pyrophosphate (PPi) forming two phosphate ions. The protein is Inorganic pyrophosphatase of Corynebacterium glutamicum (strain ATCC 13032 / DSM 20300 / JCM 1318 / BCRC 11384 / CCUG 27702 / LMG 3730 / NBRC 12168 / NCIMB 10025 / NRRL B-2784 / 534).